Consider the following 137-residue polypeptide: Large ribosomal subunit protein uL16 (137 aa).

It belongs to the universal ribosomal protein uL16 family. In terms of assembly, part of the 50S ribosomal subunit.

Functionally, binds 23S rRNA and is also seen to make contacts with the A and possibly P site tRNAs. The sequence is that of Large ribosomal subunit protein uL16 from Mycoplasma mycoides subsp. mycoides SC (strain CCUG 32753 / NCTC 10114 / PG1).